The primary structure comprises 311 residues: Beta-lactamase (311 aa).

Positions methionine 1–alanine 34 form a signal peptide, tat-type signal. Serine 87 functions as the Acyl-ester intermediate in the catalytic mechanism. Lysine 255–glycine 257 lines the substrate pocket.

This sequence belongs to the class-A beta-lactamase family. Post-translationally, predicted to be exported by the Tat system. The position of the signal peptide cleavage has not been experimentally proven.

It catalyses the reaction a beta-lactam + H2O = a substituted beta-amino acid. The sequence is that of Beta-lactamase (bla) from Kitasatospora aureofaciens (Streptomyces aureofaciens).